The sequence spans 430 residues: Purine nucleoside phosphorylase LACC1 (430 aa).

At lysine 247 the chain carries N6-acetyllysine. Residues histidine 250, cysteine 284, and histidine 301 each coordinate Zn(2+).

Belongs to the purine nucleoside phosphorylase YfiH/LACC1 family. As to quaternary structure, interacts with FASN. Interacts with SDHA. Interacts with ATF6, EIF2AK3 and ERN1. In terms of processing, phosphorylated on tyrosine residues. As to expression, predominantly expressed in myeloid cells. Highly expressed in primary macrophages and dendritic cells sorted from the peritoneum or spleen, respectively (at protein level).

The protein resides in the cytoplasm. It localises to the nucleus. Its subcellular location is the endoplasmic reticulum. It is found in the peroxisome. It carries out the reaction adenosine + phosphate = alpha-D-ribose 1-phosphate + adenine. The enzyme catalyses inosine + phosphate = alpha-D-ribose 1-phosphate + hypoxanthine. It catalyses the reaction guanosine + phosphate = alpha-D-ribose 1-phosphate + guanine. The catalysed reaction is S-methyl-5'-thioadenosine + phosphate = 5-(methylsulfanyl)-alpha-D-ribose 1-phosphate + adenine. It carries out the reaction adenosine + H2O + H(+) = inosine + NH4(+). Purine nucleoside enzyme that catalyzes the phosphorolysis of adenosine, guanosine and inosine nucleosides, yielding D-ribose 1-phosphate and the respective free bases, adenine, guanine and hypoxanthine. Also catalyzes the phosphorolysis of S-methyl-5'-thioadenosine into adenine and S-methyl-5-thio-alpha-D-ribose 1-phosphate. Also has adenosine deaminase activity. Acts as a regulator of innate immunity in macrophages by modulating the purine nucleotide metabolism, thereby regulating the metabolic function and bioenergetic state of macrophages. Enables a purine nucleotide cycle between adenosine and inosine monophosphate and adenylosuccinate that prevents cytoplasmic acidification and balances the cytoplasmic-mitochondrial redox interface. The purine nucleotide cycle consumes aspartate and releases fumarate in a manner involving fatty acid oxidation and ATP-citrate lyase activity. Participates in pattern recognition receptor-induced cytokines in macrophages: associates with the NOD2-signaling complex and promotes optimal NOD2-induced signaling, cytokine secretion and bacterial clearance. Localizes to the endoplasmic reticulum upon PRR stimulation of macrophages and associates with endoplasmic reticulum-stress sensors, promoting the endoplasmic reticulum unfolded protein response (UPR). Does not show laccase activity. The sequence is that of Purine nucleoside phosphorylase LACC1 from Mus musculus (Mouse).